Reading from the N-terminus, the 301-residue chain is HTH-type transcriptional regulator AbaB (301 aa).

Residues 1 to 58 (MDLALLRTFVTVHRAGSFTRAAALLGLSQPAVTSQIRTLERQLGRPLFLRQARGVTPT) form the HTH lysR-type domain. Positions 18–37 (FTRAAALLGLSQPAVTSQIR) form a DNA-binding region, H-T-H motif.

Belongs to the LysR transcriptional regulatory family.

In terms of biological role, putative regulator that may be involved in stimulating antibiotic production in S.antibioticus. This chain is HTH-type transcriptional regulator AbaB, found in Streptomyces antibioticus.